Reading from the N-terminus, the 171-residue chain is S-ribosylhomocysteine lyase (171 aa).

Positions 54, 58, and 128 each coordinate Fe cation.

It belongs to the LuxS family. Homodimer. Requires Fe cation as cofactor.

The enzyme catalyses S-(5-deoxy-D-ribos-5-yl)-L-homocysteine = (S)-4,5-dihydroxypentane-2,3-dione + L-homocysteine. Functionally, involved in the synthesis of autoinducer 2 (AI-2) which is secreted by bacteria and is used to communicate both the cell density and the metabolic potential of the environment. The regulation of gene expression in response to changes in cell density is called quorum sensing. Catalyzes the transformation of S-ribosylhomocysteine (RHC) to homocysteine (HC) and 4,5-dihydroxy-2,3-pentadione (DPD). The sequence is that of S-ribosylhomocysteine lyase from Escherichia fergusonii (strain ATCC 35469 / DSM 13698 / CCUG 18766 / IAM 14443 / JCM 21226 / LMG 7866 / NBRC 102419 / NCTC 12128 / CDC 0568-73).